The primary structure comprises 263 residues: Formamidopyrimidine-DNA glycosylase (263 aa).

Pro-2 (schiff-base intermediate with DNA) is an active-site residue. Glu-3 (proton donor) is an active-site residue. Lys-59 serves as the catalytic Proton donor; for beta-elimination activity. Residues His-93 and Arg-111 each contribute to the DNA site. Residues 229–263 form an FPG-type zinc finger; the sequence is KVYGKNGSLCVRCNNVLIRERHAGRSTHYCPHCQK. The active-site Proton donor; for delta-elimination activity is Arg-253.

Belongs to the FPG family. Monomer. Zn(2+) is required as a cofactor.

It carries out the reaction Hydrolysis of DNA containing ring-opened 7-methylguanine residues, releasing 2,6-diamino-4-hydroxy-5-(N-methyl)formamidopyrimidine.. The catalysed reaction is 2'-deoxyribonucleotide-(2'-deoxyribose 5'-phosphate)-2'-deoxyribonucleotide-DNA = a 3'-end 2'-deoxyribonucleotide-(2,3-dehydro-2,3-deoxyribose 5'-phosphate)-DNA + a 5'-end 5'-phospho-2'-deoxyribonucleoside-DNA + H(+). In terms of biological role, involved in base excision repair of DNA damaged by oxidation or by mutagenic agents. Acts as a DNA glycosylase that recognizes and removes damaged bases. Has a preference for oxidized purines, such as 7,8-dihydro-8-oxoguanine (8-oxoG). Has AP (apurinic/apyrimidinic) lyase activity and introduces nicks in the DNA strand. Cleaves the DNA backbone by beta-delta elimination to generate a single-strand break at the site of the removed base with both 3'- and 5'-phosphates. In Carboxydothermus hydrogenoformans (strain ATCC BAA-161 / DSM 6008 / Z-2901), this protein is Formamidopyrimidine-DNA glycosylase.